Reading from the N-terminus, the 222-residue chain is Protein CicA (222 aa).

This Caulobacter vibrioides (strain ATCC 19089 / CIP 103742 / CB 15) (Caulobacter crescentus) protein is Protein CicA (cicA).